A 467-amino-acid chain; its full sequence is Uronate isomerase (467 aa).

The protein belongs to the metallo-dependent hydrolases superfamily. Uronate isomerase family.

The catalysed reaction is D-glucuronate = D-fructuronate. It catalyses the reaction aldehydo-D-galacturonate = keto-D-tagaturonate. Its pathway is carbohydrate metabolism; pentose and glucuronate interconversion. This is Uronate isomerase from Haemophilus influenzae (strain 86-028NP).